The following is a 514-amino-acid chain: Prolyl 3,4-dihydroxylase OGFOD1 (514 aa).

Residues Gly114 to Thr221 form the Fe2OG dioxygenase domain. The Fe cation site is built by His132 and Asp134. Residue Tyr146 coordinates 2-oxoglutarate. His200 is a binding site for Fe cation. Position 212 (Arg212) interacts with 2-oxoglutarate.

It belongs to the TPA1 family. Monomer and homodimer. Fe(2+) is required as a cofactor. The cofactor is L-ascorbate.

The catalysed reaction is [ribosomal protein uS12]-L-proline + 2-oxoglutarate + O2 = [ribosomal protein uS12]-(3S)-3-hydroxy-L-proline + succinate + CO2. It carries out the reaction [ribosomal protein uS12]-(3S)-3-hydroxy-L-proline + 2-oxoglutarate + O2 = [ribosomal protein uS12]-(3S)-3,4-dihydroxy-L-proline + succinate + CO2. Prolyl 3,4-dihydroxylase that catalyzes 3,4-dihydroxylation of 'Pro-61' of small ribosomal subunit uS12 (RPS23), thereby regulating protein translation termination efficiency. The chain is Prolyl 3,4-dihydroxylase OGFOD1 (Ogd) from Ostreococcus tauri.